We begin with the raw amino-acid sequence, 651 residues long: Probable export ATP-binding/permease protein Pfl01_2215 (651 aa).

Positions 6 to 244 (LQLTGISRSF…LSNEDAVPKS (239 aa)) constitute an ABC transporter domain. 42–49 (GASGSGKS) serves as a coordination point for ATP. The next 5 helical transmembrane spans lie at 250–270 (LVAS…ALIS), 276–296 (LLTM…SAIG), 524–544 (LALL…IGVM), 585–605 (LGGA…SLFI), and 614–634 (LTSV…FGFV).

The protein belongs to the ABC transporter superfamily. Macrolide exporter (TC 3.A.1.122) family. In terms of assembly, probably part of a tripartite efflux system, which is composed of an inner membrane transporter, a periplasmic membrane fusion protein, and an outer membrane component.

It localises to the cell inner membrane. In terms of biological role, probably part of a tripartite efflux system. The chain is Probable export ATP-binding/permease protein Pfl01_2215 from Pseudomonas fluorescens (strain Pf0-1).